Consider the following 314-residue polypeptide: MRKKCIVIVGPTGVGKTRLSIFLAKRLSSEIISADSMQIYKYMDIGTAKVEPKYQRVIKHHLIDIVEPYENFNVEQFKNLCIEKIEEISSKNKIPIIVGGTGLYINSITHKLEFNAVKSDDKLREELENISLQYGNEKLHEILEDIDPKSADKIHMNNVRRVIRAIEVCKLTGHKFSEINDKFDHYNDDYDFYIIGLNDDRQVLYERINKRVDEMIDEGFMAECKYIYEMTDENSQSIQAIGYREAFMYLNNKISFKDMISLMKKNSRKYAKRQLTWFRQDKRIHWMNLKDFREFEDIEQICLKNVKEWLYDKR.

10-17 contacts ATP; it reads GPTGVGKT. Substrate is bound at residue 12–17; it reads TGVGKT. The interval 35 to 38 is interaction with substrate tRNA; that stretch reads DSMQ.

Belongs to the IPP transferase family. As to quaternary structure, monomer. Requires Mg(2+) as cofactor.

It catalyses the reaction adenosine(37) in tRNA + dimethylallyl diphosphate = N(6)-dimethylallyladenosine(37) in tRNA + diphosphate. Catalyzes the transfer of a dimethylallyl group onto the adenine at position 37 in tRNAs that read codons beginning with uridine, leading to the formation of N6-(dimethylallyl)adenosine (i(6)A). The protein is tRNA dimethylallyltransferase of Finegoldia magna (strain ATCC 29328 / DSM 20472 / WAL 2508) (Peptostreptococcus magnus).